Here is a 423-residue protein sequence, read N- to C-terminus: Chitinase 1 (423 aa).

The N-terminal stretch at 1 to 22 is a signal peptide; that stretch reads MLSFVKKSIALVAALQAVTALA. A propeptide spanning residues 23–34 is cleaved from the precursor; it reads TPISSEAGVEKR. Residues 38–401 enclose the GH18 domain; that stretch reads FANAVYFTNW…STSHQGLGSQ (364 aa). Residues 102–103 and 129–132 each bind chitin; these read GT and GGWT. Glu-171 acts as the Proton donor in catalysis. Chitin-binding positions include Tyr-172, 237 to 240, and Trp-378; that span reads MAYD.

Belongs to the glycosyl hydrolase 18 family. Chitinase class V subfamily.

The protein resides in the secreted. The catalysed reaction is Random endo-hydrolysis of N-acetyl-beta-D-glucosaminide (1-&gt;4)-beta-linkages in chitin and chitodextrins.. The chain is Chitinase 1 (CHI1) from Aphanocladium album (Wheat rust fungus).